The chain runs to 445 residues: Glutamate--tRNA ligase 1 (445 aa).

Residues 10–20 (PSPTGMLHVGN) carry the 'HIGH' region motif. A 'KMSKS' region motif is present at residues 240 to 244 (KISKR). Lys243 lines the ATP pocket.

This sequence belongs to the class-I aminoacyl-tRNA synthetase family. Glutamate--tRNA ligase type 1 subfamily. Monomer.

The protein resides in the cytoplasm. It catalyses the reaction tRNA(Glu) + L-glutamate + ATP = L-glutamyl-tRNA(Glu) + AMP + diphosphate. Functionally, catalyzes the attachment of glutamate to tRNA(Glu) in a two-step reaction: glutamate is first activated by ATP to form Glu-AMP and then transferred to the acceptor end of tRNA(Glu). The protein is Glutamate--tRNA ligase 1 of Rickettsia bellii (strain OSU 85-389).